The primary structure comprises 885 residues: Conidiophore development regulator abaA (885 aa).

Over residues 1-20 the composition is skewed to polar residues; that stretch reads MSSLFQPRPVLSSQRYSQSP. The tract at residues 1 to 25 is disordered; that stretch reads MSSLFQPRPVLSSQRYSQSPDYVDT. The segment at residues 124 to 217 is a DNA-binding region (TEA); the sequence is QKDKGGVWRR…QVVKKFFEDL (94 aa). Disordered stretches follow at residues 502-539 and 817-885; these read KEKRRKYADGDGKKELERAGSKRKRSEDEGDAASWTRR and APGS…TAGW. Basic and acidic residues-rich tracts occupy residues 508-521 and 831-840; these read YADGDGKKELERAG and VESHAGDHHG.

This sequence belongs to the TEC1 family.

It localises to the nucleus. Functionally, brlA, abaA and wetA are pivotal regulators of conidiophore development and conidium maturation. They act individually and together to regulate their own expression and that of numerous other sporulation-specific genes. BrlA, abaA and wetA act together to positively regulate the expression of the Pks1 gene cluster that mediates the biosynthesis of an anthraquinone derivative pigment that contributes to conidial pigmentation that provides protection from UV radiation, heat and cold stress. The chain is Conidiophore development regulator abaA from Metarhizium robertsii (strain ARSEF 23 / ATCC MYA-3075) (Metarhizium anisopliae (strain ARSEF 23)).